Reading from the N-terminus, the 226-residue chain is PKHD-type hydroxylase Plav_0377 (226 aa).

A Fe2OG dioxygenase domain is found at 78 to 178 (KVLPPRFNRY…RLASFFWVQS (101 aa)). Fe cation-binding residues include His96, Asp98, and His159. Arg169 contacts 2-oxoglutarate.

Requires Fe(2+) as cofactor. The cofactor is L-ascorbate.

The sequence is that of PKHD-type hydroxylase Plav_0377 from Parvibaculum lavamentivorans (strain DS-1 / DSM 13023 / NCIMB 13966).